Here is a 96-residue protein sequence, read N- to C-terminus: Large ribosomal subunit protein bL27 (96 aa).

A propeptide spanning residues 1 to 9 (MLRLDLQFF) is cleaved from the precursor. Residues 13–35 (KGVGSTKNGRDSQSKRLGAKRAD) are disordered.

Belongs to the bacterial ribosomal protein bL27 family. Post-translationally, the N-terminus is cleaved by ribosomal processing cysteine protease Prp.

The chain is Large ribosomal subunit protein bL27 from Bacillus cereus (strain B4264).